Consider the following 253-residue polypeptide: Vacuolar v-SNARE NYV1 (253 aa).

Over 1–231 the chain is Cytoplasmic; that stretch reads MKRFNVSYVE…EIMWWQKVKN (231 aa). Positions 147–166 are disordered; it reads LNSSGNGQSSNGNGQNTISD. A compositionally biased stretch (low complexity) spans 148 to 162; that stretch reads NSSGNGQSSNGNGQN. One can recognise a v-SNARE coiled-coil homology domain in the interval 167–227; it reads IGDATEDQIK…VNIKEIMWWQ (61 aa). The helical; Anchor for type IV membrane protein transmembrane segment at 232-252 threads the bilayer; it reads ITLLTFTIILFVSAAFMFFYL. Residue W253 is a topological domain, vacuolar.

Belongs to the synaptobrevin family. In terms of assembly, present in a pentameric cis-SNARE complex composed of the v-SNAREs NYV1, VTI1 and YKT6, and the t-SNAREs VAM3 and VAM7 on vacuolar membranes. Interacts in trans with the cognate t-SNARE VAM3 during the docking step of homotypic vacuolar fusion. Interacts with the vacuolar transporter chaperone (VTC) complex and the vacuolar Ca(2+)-ATPase PMC1.

It localises to the vacuole membrane. Its function is as follows. Vacuolar v-SNARE required for docking. Only involved in homotypic vacuole fusion. Required for Ca(2+) efflux from the vacuolar lumen, a required signal for subsequent membrane fusion events, by inhibiting vacuolar Ca(2+)-ATPase PMC1 and promoting Ca(2+) release when forming trans-SNARE assemblies during the docking step. The polypeptide is Vacuolar v-SNARE NYV1 (NYV1) (Saccharomyces cerevisiae (strain ATCC 204508 / S288c) (Baker's yeast)).